A 251-amino-acid polypeptide reads, in one-letter code: Triosephosphate isomerase (251 aa).

Substrate is bound at residue 8–10 (NWK). H97 (electrophile) is an active-site residue. Catalysis depends on E170, which acts as the Proton acceptor. Substrate-binding positions include G176, S215, and 236–237 (GG).

It belongs to the triosephosphate isomerase family. Homodimer.

Its subcellular location is the cytoplasm. The enzyme catalyses D-glyceraldehyde 3-phosphate = dihydroxyacetone phosphate. The protein operates within carbohydrate biosynthesis; gluconeogenesis. It functions in the pathway carbohydrate degradation; glycolysis; D-glyceraldehyde 3-phosphate from glycerone phosphate: step 1/1. Functionally, involved in the gluconeogenesis. Catalyzes stereospecifically the conversion of dihydroxyacetone phosphate (DHAP) to D-glyceraldehyde-3-phosphate (G3P). This is Triosephosphate isomerase from Nitratidesulfovibrio vulgaris (strain DSM 19637 / Miyazaki F) (Desulfovibrio vulgaris).